Here is a 67-residue protein sequence, read N- to C-terminus: ATP synthase F(0) complex subunit 8 (67 aa).

Residues 8-24 form a helical membrane-spanning segment; the sequence is TWSITIMSMIMTLFIVF. Lysine 54 carries the post-translational modification N6-acetyllysine; alternate. Lysine 54 bears the N6-succinyllysine; alternate mark. N6-acetyllysine is present on lysine 57.

It belongs to the ATPase protein 8 family. In terms of assembly, component of the ATP synthase complex composed at least of ATP5F1A/subunit alpha, ATP5F1B/subunit beta, ATP5MC1/subunit c (homooctomer), MT-ATP6/subunit a, MT-ATP8/subunit 8, ATP5ME/subunit e, ATP5MF/subunit f, ATP5MG/subunit g, ATP5MK/subunit k, ATP5MJ/subunit j, ATP5F1C/subunit gamma, ATP5F1D/subunit delta, ATP5F1E/subunit epsilon, ATP5PF/subunit F6, ATP5PB/subunit b, ATP5PD/subunit d, ATP5PO/subunit OSCP. ATP synthase complex consists of a soluble F(1) head domain (subunits alpha(3) and beta(3)) - the catalytic core - and a membrane F(0) domain - the membrane proton channel (subunits c, a, 8, e, f, g, k and j). These two domains are linked by a central stalk (subunits gamma, delta, and epsilon) rotating inside the F1 region and a stationary peripheral stalk (subunits F6, b, d, and OSCP). Interacts with PRICKLE3.

It localises to the mitochondrion membrane. Subunit 8, of the mitochondrial membrane ATP synthase complex (F(1)F(0) ATP synthase or Complex V) that produces ATP from ADP in the presence of a proton gradient across the membrane which is generated by electron transport complexes of the respiratory chain. ATP synthase complex consist of a soluble F(1) head domain - the catalytic core - and a membrane F(1) domain - the membrane proton channel. These two domains are linked by a central stalk rotating inside the F(1) region and a stationary peripheral stalk. During catalysis, ATP synthesis in the catalytic domain of F(1) is coupled via a rotary mechanism of the central stalk subunits to proton translocation. In vivo, can only synthesize ATP although its ATP hydrolase activity can be activated artificially in vitro. Part of the complex F(0) domain. The protein is ATP synthase F(0) complex subunit 8 of Felis catus (Cat).